The primary structure comprises 240 residues: Transcriptional regulatory protein ResD (240 aa).

Positions K8–L121 constitute a Response regulatory domain. Position 57 is a 4-aspartylphosphate (D57). The ompR/PhoB-type DNA-binding region spans K137 to V237.

Interacts with the RNA polymerase core. Phosphorylated by ResE.

Its subcellular location is the cytoplasm. Member of the two-component regulatory system ResD/ResE. Required for the expression of resA, ctaA, qcrABC and fnr; activation role in global regulation of aerobic and anaerobic respiration. The protein is Transcriptional regulatory protein ResD (resD) of Bacillus subtilis (strain 168).